The following is a 238-amino-acid chain: Ribonuclease PH (238 aa).

Phosphate is bound by residues Arg86 and 124-126; that span reads GTR.

The protein belongs to the RNase PH family. As to quaternary structure, homohexameric ring arranged as a trimer of dimers.

The catalysed reaction is tRNA(n+1) + phosphate = tRNA(n) + a ribonucleoside 5'-diphosphate. Phosphorolytic 3'-5' exoribonuclease that plays an important role in tRNA 3'-end maturation. Removes nucleotide residues following the 3'-CCA terminus of tRNAs; can also add nucleotides to the ends of RNA molecules by using nucleoside diphosphates as substrates, but this may not be physiologically important. Probably plays a role in initiation of 16S rRNA degradation (leading to ribosome degradation) during starvation. This Alkalilimnicola ehrlichii (strain ATCC BAA-1101 / DSM 17681 / MLHE-1) protein is Ribonuclease PH.